Reading from the N-terminus, the 367-residue chain is Phosphoribosylaminoimidazole-succinocarboxamide synthase (367 aa).

The protein belongs to the SAICAR synthetase family.

It carries out the reaction 5-amino-1-(5-phospho-D-ribosyl)imidazole-4-carboxylate + L-aspartate + ATP = (2S)-2-[5-amino-1-(5-phospho-beta-D-ribosyl)imidazole-4-carboxamido]succinate + ADP + phosphate + 2 H(+). It participates in purine metabolism; IMP biosynthesis via de novo pathway; 5-amino-1-(5-phospho-D-ribosyl)imidazole-4-carboxamide from 5-amino-1-(5-phospho-D-ribosyl)imidazole-4-carboxylate: step 1/2. In Shewanella amazonensis (strain ATCC BAA-1098 / SB2B), this protein is Phosphoribosylaminoimidazole-succinocarboxamide synthase.